Consider the following 468-residue polypeptide: Protein phosphatase ppm-1.A (468 aa).

A disordered region spans residues 1–23 (MTISRADLQIASSAEPKTHGNLN). In terms of domain architecture, PPM-type phosphatase spans 106 to 381 (RYGMSSMQGW…DNMTMVVVCF (276 aa)). 4 residues coordinate Mn(2+): aspartate 145, glycine 146, aspartate 329, and aspartate 372.

It belongs to the PP2C family. Mg(2+) serves as cofactor. The cofactor is Mn(2+). As to expression, expressed in neurons of the nerve ring and motor neurons of the ventral nerve cord.

Its subcellular location is the synapse. The catalysed reaction is O-phospho-L-seryl-[protein] + H2O = L-seryl-[protein] + phosphate. The enzyme catalyses O-phospho-L-threonyl-[protein] + H2O = L-threonyl-[protein] + phosphate. Probable phosphatase which regulates axon termination in ALM and PLM neurons, and synaptic branch extension and/or stabilization in PLM neurons. Plays a role in synapse formation in GABAergic DD motor neurons probably by dephosphorylating pmk-3 thereby negatively regulating a MAP kinase pathway that includes dlk-1, mkk-4 and pmk-3. This Caenorhabditis elegans protein is Protein phosphatase ppm-1.A.